Here is a 1299-residue protein sequence, read N- to C-terminus: DNA-directed RNA polymerase subunit beta' (1299 aa).

The Zn(2+) site is built by cysteine 60, cysteine 62, cysteine 75, and cysteine 78. Positions 188 to 209 (GAKSDQKRRAKDGAEKEMGQTR) are disordered. Aspartate 535, aspartate 537, and aspartate 539 together coordinate Mg(2+). Positions 882, 959, 966, and 969 each coordinate Zn(2+).

The protein belongs to the RNA polymerase beta' chain family. The RNAP catalytic core consists of 2 alpha, 1 beta, 1 beta' and 1 omega subunit. When a sigma factor is associated with the core the holoenzyme is formed, which can initiate transcription. The cofactor is Mg(2+). Zn(2+) serves as cofactor.

The enzyme catalyses RNA(n) + a ribonucleoside 5'-triphosphate = RNA(n+1) + diphosphate. In terms of biological role, DNA-dependent RNA polymerase catalyzes the transcription of DNA into RNA using the four ribonucleoside triphosphates as substrates. The polypeptide is DNA-directed RNA polymerase subunit beta' (Clavibacter michiganensis subsp. michiganensis (strain NCPPB 382)).